The sequence spans 70 residues: Venom antimicrobial peptide-6 (70 aa).

Residues 1–23 (MKSQTFFLLFLVVFLLAITQSEA) form the signal peptide. The residue at position 36 (Phe-36) is a Phenylalanine amide. Positions 40 to 70 (SLRDMDTMKYLYDPSLSAADLKTLQKLMENY) are excised as a propeptide.

It belongs to the non-disulfide-bridged peptide (NDBP) superfamily. Short antimicrobial peptide (group 4) family. As to expression, expressed by the venom gland.

It localises to the secreted. Its subcellular location is the target cell membrane. Amphipathic peptide that exhibits extensive cytolytic activities against both prokaryotic and eukaryotic cells. Is more potent against Gram-positive bacteria (lethal concentration (LC)=0.25-2.9 uM) than against Gram-negative bacteria (LC=6.2-&gt;50 uM), and fungi ((LC)=14.1-&gt;50 uM). Shows hemolytic activity against rabbit erythrocytes (37.7% of inhibition at 6.25 uM) and cytolysis against rat dorsal root ganglions. In vivo, intravenous injection into mice tail provokes uncomfortable symptoms with a death rate of 12.5%. The polypeptide is Venom antimicrobial peptide-6 (Mesobuthus eupeus (Lesser Asian scorpion)).